The following is a 351-amino-acid chain: Autoinducer 2 import system permease protein LsrC (351 aa).

9 consecutive transmembrane segments (helical) span residues 14–34, 39–59, 70–90, 93–113, 115–135, 155–175, 213–233, 252–272, and 284–304; these read LLAI…YFSL, MIFS…LVML, ITGL…GLAA, LFAL…VTWL, IPAI…MLLL, ILFS…AMAW, MNGV…GFIP, GISL…AFLL, and LPAW…LVFD.

This sequence belongs to the binding-protein-dependent transport system permease family. AraH/RbsC subfamily. In terms of assembly, the complex is composed of two ATP-binding proteins (LsrA), two transmembrane proteins (LsrC and LsrD) and a solute-binding protein (LsrB).

Its subcellular location is the cell inner membrane. In terms of biological role, part of the ABC transporter complex LsrABCD involved in autoinducer 2 (AI-2) import. Probably responsible for the translocation of the substrate across the membrane. This chain is Autoinducer 2 import system permease protein LsrC (lsrC), found in Yersinia pseudotuberculosis serotype O:1b (strain IP 31758).